The sequence spans 284 residues: Tropomyosin (284 aa).

The residue at position 1 (methionine 1) is an N-acetylmethionine. 2 disordered regions span residues 1–49 and 103–126; these read MDAI…NQKK and EERL…SERM. The stretch at 1-284 forms a coiled coil; sequence MDAIKKKMQA…DQAFSELSGF (284 aa). Basic and acidic residues predominate over residues 12–45; the sequence is KLEKDNAMDKADTLEQQNKEANLRAEKTEEEIRA.

Belongs to the tropomyosin family. Homodimer. Expressed in leg muscle and chest protection muscle (at protein level).

In terms of biological role, tropomyosin, in association with the troponin complex, plays a central role in the calcium dependent regulation of muscle contraction. The sequence is that of Tropomyosin from Chionoecetes opilio (Atlantic snow crab).